The chain runs to 985 residues: Cation channel sperm-associated auxiliary subunit epsilon (985 aa).

The signal sequence occupies residues 1–35; that stretch reads MPSAGQRKPGSLLALQALQKWLLRGGVGAMLARQV. Over 36–937 the chain is Extracellular; it reads VAALLLWLSC…ESLGMIPRSS (902 aa). 4 disulfides stabilise this stretch: Cys87-Cys101, Cys130-Cys235, Cys275-Cys365, and Cys439-Cys442. N-linked (GlcNAc...) asparagine glycosylation is found at Asn91, Asn143, and Asn292. Asn502, Asn517, and Asn565 each carry an N-linked (GlcNAc...) asparagine glycan. Disulfide bonds link Cys617–Cys724, Cys737–Cys919, Cys753–Cys786, and Cys838–Cys869. A glycan (N-linked (GlcNAc...) asparagine) is linked at Asn749. Asn830 is a glycosylation site (N-linked (GlcNAc...) asparagine). Residues Asn888, Asn915, and Asn920 are each glycosylated (N-linked (GlcNAc...) asparagine). Residues 938–958 form a helical membrane-spanning segment; sequence VYLVAALIFVLMLTFISILVL. At 959–985 the chain is on the cytoplasmic side; the sequence is SYFWYLKIYRQFIIEPLHKRPAKQKKN.

This sequence belongs to the CATSPERD family. As to quaternary structure, component of the CatSper complex or CatSpermasome composed of the core pore-forming members CATSPER1, CATSPER2, CATSPER3 and CATSPER4 as well as auxiliary members CATSPERB, CATSPERG2, CATSPERD, CATSPERE, CATSPERZ, C2CD6/CATSPERT, SLCO6C1, TMEM249, TMEM262 and EFCAB9. HSPA1 may be an additional auxiliary complex member. The core complex members CATSPER1, CATSPER2, CATSPER3 and CATSPER4 form a heterotetrameric channel. The auxiliary CATSPERB, CATSPERG2, CATSPERD and CATSPERE subunits form a pavilion-like structure over the pore which stabilizes the complex through interactions with CATSPER4, CATSPER3, CATSPER1 and CATSPER2 respectively. SLCO6C1 interacts with CATSPERE and TMEM262/CATSPERH interacts with CATSPERB, further stabilizing the complex. C2CD6/CATSPERT interacts at least with CATSPERD and is required for targeting the CatSper complex in the flagellar membrane. As to expression, testis-specific.

The protein localises to the cell projection. Its subcellular location is the cilium. The protein resides in the flagellum membrane. Auxiliary component of the CatSper complex, a complex involved in sperm cell hyperactivation. Sperm cell hyperactivation is needed for sperm motility which is essential late in the preparation of sperm for fertilization. This Mus musculus (Mouse) protein is Cation channel sperm-associated auxiliary subunit epsilon.